The following is a 132-amino-acid chain: Inclusion membrane protein E (132 aa).

Transmembrane regions (helical) follow at residues 41 to 61 (LGVV…AVGV) and 66 to 86 (FALG…ATSA).

The protein localises to the secreted. It localises to the host vacuole. Its subcellular location is the host pathogen-containing vacuole. It is found in the host pathogen-containing vacuole membrane. Functionally, inclusion membrane protein probably involved in early modification events of the chlamydial inclusion. This Chlamydia trachomatis serovar L2 (strain ATCC VR-902B / DSM 19102 / 434/Bu) protein is Inclusion membrane protein E.